Consider the following 226-residue polypeptide: Respiratory nitrate reductase 2 gamma chain (226 aa).

At 1 to 4 (MIQY) the chain is on the periplasmic side. A helical membrane pass occupies residues 5 to 30 (LNVFFYDIYPYICATVFFLGSWLRYD). Over 31–48 (YGQYTWRASSSQMLDKRG) the chain is Cytoplasmic. The helical transmembrane segment at 49–71 (MVIWSNLFHIGILGIFFGHLFGM) threads the bilayer. Heme b-binding residues include histidine 57 and histidine 67. The Periplasmic portion of the chain corresponds to 72–83 (LTPHWMYAWFLP). The chain crosses the membrane as a helical span at residues 84–113 (VAAKQLMAMVLGGICGVLTLIGGAGLLWRR). The Cytoplasmic segment spans residues 114–125 (LTNQRVRATSTT). A helical transmembrane segment spans residues 126–149 (PDIIIMSILLIQCLLGLSTIPFSA). Residues 150–183 (QYPDGSEMMKLVGWAQSIVTFRGGSSEMLNGVAF) are Periplasmic-facing. A helical transmembrane segment spans residues 184 to 199 (VFRLHLVLGMTIFLLF). Heme b contacts are provided by histidine 188 and histidine 206. Over 200-226 (PFTRLVHVWSAPFEYFTRRYQIVRSRR) the chain is Cytoplasmic.

In terms of assembly, dimer of heterotrimers each composed of an alpha, a beta and a gamma chain. Alpha and beta are catalytic chains; gamma chains are involved in binding the enzyme complex to the cytoplasmic membrane. Heme is required as a cofactor.

It is found in the cell inner membrane. It carries out the reaction nitrate + a quinol = a quinone + nitrite + H2O. In terms of biological role, this is a second nitrate reductase enzyme which can substitute for the NRA enzyme and allows E.coli to use nitrate as an electron acceptor during anaerobic growth. The gamma chain is a membrane-embedded heme-iron unit resembling cytochrome b, which transfers electrons from quinones to the beta subunit. This chain is Respiratory nitrate reductase 2 gamma chain (narV), found in Escherichia coli (strain K12).